Here is a 450-residue protein sequence, read N- to C-terminus: Glucose-6-phosphate isomerase (450 aa).

The active-site Proton donor is the glutamate 290. Residues histidine 311 and lysine 425 contribute to the active site.

The protein belongs to the GPI family.

Its subcellular location is the cytoplasm. It catalyses the reaction alpha-D-glucose 6-phosphate = beta-D-fructose 6-phosphate. Its pathway is carbohydrate biosynthesis; gluconeogenesis. It participates in carbohydrate degradation; glycolysis; D-glyceraldehyde 3-phosphate and glycerone phosphate from D-glucose: step 2/4. Its function is as follows. Catalyzes the reversible isomerization of glucose-6-phosphate to fructose-6-phosphate. In Lactiplantibacillus plantarum (strain ATCC BAA-793 / NCIMB 8826 / WCFS1) (Lactobacillus plantarum), this protein is Glucose-6-phosphate isomerase.